The chain runs to 422 residues: Histidine--tRNA ligase (422 aa).

It belongs to the class-II aminoacyl-tRNA synthetase family. As to quaternary structure, homodimer.

It is found in the cytoplasm. The catalysed reaction is tRNA(His) + L-histidine + ATP = L-histidyl-tRNA(His) + AMP + diphosphate + H(+). The chain is Histidine--tRNA ligase from Vibrio vulnificus (strain CMCP6).